Here is a 502-residue protein sequence, read N- to C-terminus: ATP synthase subunit alpha (502 aa).

169–176 (GDRQVGKT) contacts ATP.

Belongs to the ATPase alpha/beta chains family. As to quaternary structure, F-type ATPases have 2 components, CF(1) - the catalytic core - and CF(0) - the membrane proton channel. CF(1) has five subunits: alpha(3), beta(3), gamma(1), delta(1), epsilon(1). CF(0) has three main subunits: a(1), b(2) and c(9-12). The alpha and beta chains form an alternating ring which encloses part of the gamma chain. CF(1) is attached to CF(0) by a central stalk formed by the gamma and epsilon chains, while a peripheral stalk is formed by the delta and b chains.

The protein localises to the cell membrane. It catalyses the reaction ATP + H2O + 4 H(+)(in) = ADP + phosphate + 5 H(+)(out). In terms of biological role, produces ATP from ADP in the presence of a proton gradient across the membrane. The alpha chain is a regulatory subunit. The chain is ATP synthase subunit alpha from Lysinibacillus sphaericus (strain C3-41).